Reading from the N-terminus, the 299-residue chain is MLDKTRLRIAMQKSGRLSDESQELLSRCGIKINLQQQRLIAFAENMPIDILRVRDDDIPGLVMDGVVDLGIIGENVLEEELLNRRAQGDDPRYFTLRRLDFGGCRLSLAAPLDAEYTGPQCLQDTRIATSYPHILKQYLDKQGVRFKSCLLNGSVEVAPRAGLADAICDLVSTGATLEANGLREVEVIYRSKACLIQRDGEMSVDKQQLIDRLMTRIQGVIQARESKYIMMHAPSERLDEIITLLPGAERPTILPLAGDKSRVAMHMVSSETLFWETMEKLKALGASSILVLPIEKMME.

It belongs to the ATP phosphoribosyltransferase family. Long subfamily. As to quaternary structure, equilibrium between an active dimeric form, an inactive hexameric form and higher aggregates. Interconversion between the various forms is largely reversible and is influenced by the natural substrates and inhibitors of the enzyme. It depends on Mg(2+) as a cofactor.

The protein resides in the cytoplasm. It catalyses the reaction 1-(5-phospho-beta-D-ribosyl)-ATP + diphosphate = 5-phospho-alpha-D-ribose 1-diphosphate + ATP. The protein operates within amino-acid biosynthesis; L-histidine biosynthesis; L-histidine from 5-phospho-alpha-D-ribose 1-diphosphate: step 1/9. Feedback inhibited by histidine. Functionally, catalyzes the condensation of ATP and 5-phosphoribose 1-diphosphate to form N'-(5'-phosphoribosyl)-ATP (PR-ATP). Has a crucial role in the pathway because the rate of histidine biosynthesis seems to be controlled primarily by regulation of HisG enzymatic activity. This chain is ATP phosphoribosyltransferase, found in Yersinia pseudotuberculosis serotype O:1b (strain IP 31758).